The following is a 346-amino-acid chain: MTTKISRRTFFVGGTALTALVVANLPRRASAQSRTINLYSSRHYNTDDALYDAFGEVNLIEASAEELIERIQSEGANSPGDILFTVDAGMLWRAEQAGLFQPVRSGKLNERIPENLRHPDGLWYGFTQRARVLYYSRDRVNPADLSTYEALADPQWRGKILVRPSSNVYNLSLTASRIAIHGEPETRRWLQGLVGNFARQPEGNDTAQIRAIAAGIGDVAIANSYYYIRLQKSTDPADQEVVEKVSLFFPNTGSGERGTHVNVSGAGVLKNAPNRDAAIAFLEYLASDDAQRYFAEGNNEYPVIPGVPIDPVLAAHGQLKGDPLNVSNLGRYQPDSARLMNEVGWQ.

Positions 1–31 form a signal peptide, tat-type signal; that stretch reads MTTKISRRTFFVGGTALTALVVANLPRRASA. Fe cation is bound by residues His43, Tyr44, Tyr169, Tyr225, and Tyr226.

The protein belongs to the bacterial solute-binding protein 1 family. Predicted to be exported by the Tat system. The position of the signal peptide cleavage has not been experimentally proven.

It is found in the cellular thylakoid membrane. It localises to the periplasm. In terms of biological role, probably part of a periplasmic ABC transporter complex futA1A2BC (TC 3.A.1.10.2) involved in Fe(3+) ion import (ferric iron). This protein and futA1 (slr1295) are subunit proteins that have redundant or overlapping substrate-binding functions. The differing subcellular locations of futA1 (predominantly thylakoid lumen) and futA2 (predominantly periplasmic) suggest they may fulfill different roles. Plays an important role in protecting the acceptor side of photosystem II (PSII) against oxidative damage, especially under iron-limiting growth conditions. Functionally, plays an undefined role in copper supply to thylakoid proteins. This chain is Iron uptake protein A2 (futA2), found in Synechocystis sp. (strain ATCC 27184 / PCC 6803 / Kazusa).